We begin with the raw amino-acid sequence, 574 residues long: Septation ring formation regulator EzrA (574 aa).

The Extracellular portion of the chain corresponds to 1 to 7 (MSSGIIL). Residues 8 to 26 (LIVAIVLLVIIAYLVGVII) form a helical membrane-spanning segment. The Cytoplasmic portion of the chain corresponds to 27 to 574 (RKRNDSLITS…YEKTREHIRF (548 aa)). 3 coiled-coil regions span residues 102–141 (NFIR…EEKN), 274–350 (ELVT…ETES), and 459–520 (QLEA…SFEA).

Belongs to the EzrA family.

It localises to the cell membrane. In terms of biological role, negative regulator of FtsZ ring formation; modulates the frequency and position of FtsZ ring formation. Inhibits FtsZ ring formation at polar sites. Interacts either with FtsZ or with one of its binding partners to promote depolymerization. In Streptococcus pyogenes serotype M1, this protein is Septation ring formation regulator EzrA.